A 753-amino-acid polypeptide reads, in one-letter code: 5-methyltetrahydropteroyltriglutamate--homocysteine methyltransferase (753 aa).

Residues 17–20 and lysine 117 contribute to the 5-methyltetrahydropteroyltri-L-glutamate site; that span reads RELK. Residues 431-433 and glutamate 484 each bind L-homocysteine; that span reads IGS. L-methionine contacts are provided by residues 431–433 and glutamate 484; that span reads IGS. Residues 515-516 and tryptophan 561 each bind 5-methyltetrahydropteroyltri-L-glutamate; that span reads RC. An L-homocysteine-binding site is contributed by aspartate 599. Aspartate 599 contributes to the L-methionine binding site. Glutamate 605 is a 5-methyltetrahydropteroyltri-L-glutamate binding site. Zn(2+) contacts are provided by histidine 641, cysteine 643, and glutamate 665. Histidine 694 acts as the Proton donor in catalysis. Residue cysteine 726 participates in Zn(2+) binding.

This sequence belongs to the vitamin-B12 independent methionine synthase family. The cofactor is Zn(2+).

The catalysed reaction is 5-methyltetrahydropteroyltri-L-glutamate + L-homocysteine = tetrahydropteroyltri-L-glutamate + L-methionine. It functions in the pathway amino-acid biosynthesis; L-methionine biosynthesis via de novo pathway; L-methionine from L-homocysteine (MetE route): step 1/1. In terms of biological role, catalyzes the transfer of a methyl group from 5-methyltetrahydrofolate to homocysteine resulting in methionine formation. The protein is 5-methyltetrahydropteroyltriglutamate--homocysteine methyltransferase of Shigella flexneri.